The following is a 1098-amino-acid chain: Ubiquitin carboxyl-terminal hydrolase 36 (1098 aa).

Residues 72–86 (RHRSGDELQARKPGT) show a composition bias toward basic and acidic residues. Positions 72 to 97 (RHRSGDELQARKPGTERVSGSGGDGV) are disordered. In terms of domain architecture, USP spans 122-423 (AGLHNLGNTC…QAYVLFYLRI (302 aa)). Catalysis depends on cysteine 131, which acts as the Nucleophile. Histidine 382 (proton acceptor) is an active-site residue. Disordered regions lie at residues 428-464 (KSPE…VPSP) and 483-574 (EVGV…RDTI). Residues serine 429, serine 463, serine 547, and serine 578 each carry the phosphoserine modification. The segment covering 540–558 (PLQSLTTSPTTSQGSPGTG) has biased composition (low complexity). The segment at 589-640 (GHRLKGEGSGVDLEKGDSSSSSPEHSASSDPAKAPQTAESRAAHACDSQGTN) is disordered. The segment covering 606–617 (SSSSSPEHSASS) has biased composition (low complexity). Serine 663 carries the phosphoserine modification. Disordered regions lie at residues 664-710 (PALS…SPSA) and 722-973 (HPVV…ALSV). Over residues 665-677 (ALSSTTTEPTSLM) the composition is skewed to polar residues. A Phosphoserine modification is found at serine 678. Residues 683-692 (KKLALSAKKA) show a composition bias toward low complexity. Serine 709 is subject to Phosphoserine. Over residues 746–763 (HPHSASLSSSSAKPLGTS) the composition is skewed to low complexity. The segment covering 853–878 (GQFQDQSWSSGSQKEEGTQPQVNGHQ) has biased composition (polar residues). Residues 889-898 (SSRKRRKRKR) are compositionally biased toward basic residues. Residues 901–917 (GLSQEATPSQDLIQHSC) show a composition bias toward polar residues. A compositionally biased stretch (basic and acidic residues) spans 921–932 (DHSEPEARTELQ). Residues 933–943 (KKKKKKRRKRK) show a composition bias toward basic residues. Basic and acidic residues predominate over residues 944–960 (PEPQQDEESKHPGDQRS).

It belongs to the peptidase C19 family. Interacts with isoform 3 of FBXW7; the interaction inhibits MYC degradation induced by SCF(FBW7) complex. Interacts with NTRK1; USP36 does not deubiquitinate NTRK1. Interacts with NEDD4L (via domains WW1, 3 and 4); the interaction inhibits ubiquitination of, at least, NTRK1, KCNQ2 and KCNQ3 by NEDD4L. Interacts (via C-terminus) with EXOSC10 (via C-terminus); the interaction is facilitated by the association with RNA and promotes sumoylation of EXOSC10. Polyubiquitinated by NEDD4L, no effect on USP36 protein levels. Both proteins interact with and regulate each other's ubiquitination levels.

It is found in the nucleus. The protein localises to the nucleolus. It localises to the cytoplasm. The catalysed reaction is Thiol-dependent hydrolysis of ester, thioester, amide, peptide and isopeptide bonds formed by the C-terminal Gly of ubiquitin (a 76-residue protein attached to proteins as an intracellular targeting signal).. Its function is as follows. Deubiquitinase essential for the regulation of nucleolar structure and function. Required for cell and organism viability. Plays an important role in ribosomal RNA processing and protein synthesis, which is mediated, at least in part, through deubiquitination of DHX33, NPM1 and FBL, regulating their protein stability. Functions as a transcriptional repressor by deubiquiting histone H2B at the promoters of genes critical for cellular differentiation, such as CDKN1A, thereby preventing histone H3 'Lys-4' trimethylation (H3K4). Specifically deubiquitinates MYC in the nucleolus, leading to prevent MYC degradation by the proteasome: acts by specifically interacting with isoform 3 of FBXW7 (FBW7gamma) in the nucleolus and counteracting ubiquitination of MYC by the SCF(FBW7) complex. In contrast, it does not interact with isoform 1 of FBXW7 (FBW7alpha) in the nucleoplasm. Interacts to and regulates the actions of E3 ubiquitin-protein ligase NEDD4L over substrates such as NTRK1, KCNQ2 and KCNQ3, affecting their expression an functions. Deubiquitinates SOD2, regulates SOD2 protein stability. Deubiquitinase activity is required to control selective autophagy activation by ubiquitinated proteins. Promotes CEP63 stabilization through 'Lys-48'-linked deubiquitination leading to increased stability. Acts as a SUMO ligase to promote EXOSC10 sumoylation critical for the nucleolar RNA exosome function in rRNA processing. Binds to pre-rRNAs. The sequence is that of Ubiquitin carboxyl-terminal hydrolase 36 (Usp36) from Mus musculus (Mouse).